The chain runs to 516 residues: Cytochrome P450 1A2 (516 aa).

Residue Ser69 is glycosylated (O-linked (GlcNAc) serine). Position 226 (Phe226) interacts with substrate. Cys458 provides a ligand contact to heme.

Belongs to the cytochrome P450 family. As to quaternary structure, interacts with PGRMC1; the interaction requires PGRMC1 homodimerization. Heme is required as a cofactor. As to expression, liver.

It localises to the endoplasmic reticulum membrane. The protein resides in the microsome membrane. It catalyses the reaction an organic molecule + reduced [NADPH--hemoprotein reductase] + O2 = an alcohol + oxidized [NADPH--hemoprotein reductase] + H2O + H(+). It carries out the reaction 17beta-estradiol + reduced [NADPH--hemoprotein reductase] + O2 = 2-hydroxy-17beta-estradiol + oxidized [NADPH--hemoprotein reductase] + H2O + H(+). The enzyme catalyses 17beta-estradiol + reduced [NADPH--hemoprotein reductase] + O2 = 4-hydroxy-17beta-estradiol + oxidized [NADPH--hemoprotein reductase] + H2O + H(+). The catalysed reaction is estrone + reduced [NADPH--hemoprotein reductase] + O2 = 2-hydroxyestrone + oxidized [NADPH--hemoprotein reductase] + H2O + H(+). It catalyses the reaction estrone + reduced [NADPH--hemoprotein reductase] + O2 = 4-hydroxyestrone + oxidized [NADPH--hemoprotein reductase] + H2O + H(+). It carries out the reaction cholesterol + reduced [NADPH--hemoprotein reductase] + O2 = 25-hydroxycholesterol + oxidized [NADPH--hemoprotein reductase] + H2O + H(+). The enzyme catalyses all-trans-retinol + reduced [NADPH--hemoprotein reductase] + O2 = all-trans-retinal + oxidized [NADPH--hemoprotein reductase] + 2 H2O + H(+). The catalysed reaction is all-trans-retinal + reduced [NADPH--hemoprotein reductase] + O2 = all-trans-retinoate + oxidized [NADPH--hemoprotein reductase] + H2O + 2 H(+). It catalyses the reaction (5Z,8Z,11Z,14Z)-eicosatetraenoate + reduced [NADPH--hemoprotein reductase] + O2 = (14R,15S)-epoxy-(5Z,8Z,11Z)-eicosatrienoate + oxidized [NADPH--hemoprotein reductase] + H2O + H(+). It carries out the reaction (5Z,8Z,11Z,14Z)-eicosatetraenoate + reduced [NADPH--hemoprotein reductase] + O2 = (14S,15R)-epoxy-(5Z,8Z,11Z)-eicosatrienoate + oxidized [NADPH--hemoprotein reductase] + H2O + H(+). The enzyme catalyses (5Z,8Z,11Z,14Z,17Z)-eicosapentaenoate + reduced [NADPH--hemoprotein reductase] + O2 = (17R,18S)-epoxy-(5Z,8Z,11Z,14Z)-eicosatetraenoate + oxidized [NADPH--hemoprotein reductase] + H2O + H(+). The catalysed reaction is (4Z,7Z,10Z,13Z,16Z,19Z)-docosahexaenoate + reduced [NADPH--hemoprotein reductase] + O2 = (19R,20S)-epoxy-(4Z,7Z,10Z,13Z,16Z)-docosapentaenoate + oxidized [NADPH--hemoprotein reductase] + H2O + H(+). It catalyses the reaction (5S)-hydroperoxy-(6E,8Z,11Z,14Z)-eicosatetraenoate = 5-oxo-(6E,8Z,11Z,14Z)-eicosatetraenoate + H2O. It carries out the reaction (12S)-hydroperoxy-(5Z,8Z,10E,14Z)-eicosatetraenoate = 12-oxo-(5Z,8Z,10E,14Z)-eicosatetraenoate + H2O. The enzyme catalyses (15S)-hydroperoxy-(5Z,8Z,11Z,13E)-eicosatetraenoate = 15-oxo-(5Z,8Z,11Z,13E)-eicosatetraenoate + H2O. The catalysed reaction is (13S)-hydroperoxy-(9Z,11E)-octadecadienoate = 13-oxo-(9Z,11E)-octadecadienoate + H2O. It catalyses the reaction (5Z,8Z,11Z,14Z)-eicosatetraenoate + reduced [NADPH--hemoprotein reductase] + O2 = 13-hydroxy-(5Z,8Z,11Z,14Z)-eicosatetraenoate + oxidized [NADPH--hemoprotein reductase] + H2O + H(+). It carries out the reaction (5Z,8Z,11Z,14Z)-eicosatetraenoate + reduced [NADPH--hemoprotein reductase] + O2 = 19-hydroxy-(5Z,8Z,11Z,14Z)-eicosatetraenoate + oxidized [NADPH--hemoprotein reductase] + H2O + H(+). The enzyme catalyses (9Z,12Z)-octadecadienoate + reduced [NADPH--hemoprotein reductase] + O2 = 11-hydroxy-(9Z,12Z)-octadecadienoate + oxidized [NADPH--hemoprotein reductase] + H2O + H(+). Its pathway is cofactor metabolism; retinol metabolism. It participates in steroid metabolism; cholesterol metabolism. The protein operates within lipid metabolism; arachidonate metabolism. A cytochrome P450 monooxygenase involved in the metabolism of various endogenous substrates, including fatty acids, steroid hormones and vitamins. Mechanistically, uses molecular oxygen inserting one oxygen atom into a substrate, and reducing the second into a water molecule, with two electrons provided by NADPH via cytochrome P450 reductase (NADPH--hemoprotein reductase). Catalyzes the hydroxylation of carbon-hydrogen bonds. Exhibits high catalytic activity for the formation of hydroxyestrogens from estrone (E1) and 17beta-estradiol (E2), namely 2-hydroxy E1 and E2. Metabolizes cholesterol toward 25-hydroxycholesterol, a physiological regulator of cellular cholesterol homeostasis. May act as a major enzyme for all-trans retinoic acid biosynthesis in the liver. Catalyzes two successive oxidative transformation of all-trans retinol to all-trans retinal and then to the active form all-trans retinoic acid. Primarily catalyzes stereoselective epoxidation of the last double bond of polyunsaturated fatty acids (PUFA), displaying a strong preference for the (R,S) stereoisomer. Catalyzes bisallylic hydroxylation and omega-1 hydroxylation of PUFA. May also participate in eicosanoids metabolism by converting hydroperoxide species into oxo metabolites (lipoxygenase-like reaction, NADPH-independent). Plays a role in the oxidative metabolism of xenobiotics. Catalyzes the N-hydroxylation of heterocyclic amines and the O-deethylation of phenacetin. Metabolizes caffeine via N3-demethylation. In Homo sapiens (Human), this protein is Cytochrome P450 1A2.